The primary structure comprises 651 residues: Bromodomain-containing protein 7 (651 aa).

Lys21 is covalently cross-linked (Glycyl lysine isopeptide (Lys-Gly) (interchain with G-Cter in SUMO2)). Residues 35–45 (TELSTGSSGHD) are compositionally biased toward polar residues. Residues 35-132 (TELSTGSSGH…SSLAKQEEVE (98 aa)) are disordered. Basic and acidic residues predominate over residues 47-57 (SLFEDKNDHDK). Lys52 is covalently cross-linked (Glycyl lysine isopeptide (Lys-Gly) (interchain with G-Cter in SUMO2)). Positions 58 to 69 (HKDRKRKKRKKG) are enriched in basic residues. The Nuclear localization signal motif lies at 65-96 (KRKKGEKQIPGEEKGRKRRRVKEDKKKRDRDR). Residues 70–106 (EKQIPGEEKGRKRRRVKEDKKKRDRDRVENEAEKDLQ) show a composition bias toward basic and acidic residues. Residues Lys127, Lys186, Lys197, Lys201, Lys212, and Lys241 each participate in a glycyl lysine isopeptide (Lys-Gly) (interchain with G-Cter in SUMO2) cross-link. The 105-residue stretch at 131 to 235 (VEQTPLQEAL…HSGMKILSQE (105 aa)) folds into the Bromo domain. Positions 253-312 (TRKQKDGTDTSQSGEDGGCWQREREDSGDAEAHASKSPSKENKKKDNDMLEDKFKSNNLE) are disordered. The span at 273–312 (QREREDSGDAEAHASKSPSKENKKKDNDMLEDKFKSNNLE) shows a compositional bias: basic and acidic residues. Ser279 and Ser289 each carry phosphoserine. Glycyl lysine isopeptide (Lys-Gly) (interchain with G-Cter in SUMO2) cross-links involve residues Lys305 and Lys307. An N6-acetyllysine modification is found at Lys328. Lys344 is covalently cross-linked (Glycyl lysine isopeptide (Lys-Gly) (interchain with G-Cter in SUMO2)). Ser380 bears the Phosphoserine mark. Residue Lys389 forms a Glycyl lysine isopeptide (Lys-Gly) (interchain with G-Cter in SUMO2) linkage. Ser482 carries the post-translational modification Phosphoserine. Residue Thr514 is modified to Phosphothreonine. The stretch at 536–567 (SEEAEIFQKKLDETTRLLRELQEAQNERLSTR) forms a coiled coil. A Phosphoserine modification is found at Ser621.

Interacts with TRIM24, PTPN13 and DVL1. Identified in a complex with SMARCA4/BRG1, SMARCC1/BAF155, SMARCE1/BAF57, DPF2/BAF45D and ARID2, subunits of the SWI/SNF-B (PBAF) chromatin remodeling complex. Interacts with IRF2 and HNRPUL1. Interacts (via N-terminus) with TP53. Interacts (via C-terminus) with EP300. Interacts with BRCA1. Interacts (via bromo domain) with histone H3 (via N-terminus) acetylated at 'Lys-14' (H3K14ac). Has low affinity for histone H3 acetylated at 'Lys-9' (H3K9ac). Has the highest affinity for histone H3 that is acetylated both at 'Lys-9' (H3K9ac) and at 'Lys-14' (H3K14ac). Has very low affinity for non-acetylated histone H3. Interacts (via bromo domain) with histone H4 (via N-terminus) acetylated at 'Lys-8' (H3K8ac) (in vitro).

The protein resides in the nucleus. The protein localises to the chromosome. In terms of biological role, acts both as coactivator and as corepressor. May play a role in chromatin remodeling. Activator of the Wnt signaling pathway in a DVL1-dependent manner by negatively regulating the GSK3B phosphotransferase activity. Induces dephosphorylation of GSK3B at 'Tyr-216'. Down-regulates TRIM24-mediated activation of transcriptional activation by AR. Transcriptional corepressor that down-regulates the expression of target genes. Binds to target promoters, leading to increased histone H3 acetylation at 'Lys-9' (H3K9ac). Binds to the ESR1 promoter. Recruits BRCA1 and POU2F1 to the ESR1 promoter. Coactivator for TP53-mediated activation of transcription of a set of target genes. Required for TP53-mediated cell-cycle arrest in response to oncogene activation. Promotes acetylation of TP53 at 'Lys-382', and thereby promotes efficient recruitment of TP53 to target promoters. Inhibits cell cycle progression from G1 to S phase. This Pongo abelii (Sumatran orangutan) protein is Bromodomain-containing protein 7 (BRD7).